Here is a 316-residue protein sequence, read N- to C-terminus: Apolipoprotein E (316 aa).

Residues 1-18 (MKVLWVALVITLLAGCQA) form the signal peptide. Tandem repeats lie at residues 79-100 (VLMD…GQLA), 101-122 (PIAQ…ARLA), 123-144 (SDME…AMMG), 145-166 (QTTD…KRLL), 167-188 (RDAE…EGSE), 189-210 (RSVS…ARAA), 211-232 (TVGT…QKLR), and 233-254 (GRVE…EQLE). The interval 79–254 (VLMDETMKEV…HLEEMREQLE (176 aa)) is 8 X 22 AA approximate tandem repeats. Met-142 carries the post-translational modification Methionine sulfoxide. The interval 157–167 (HLRKLRKRLLR) is LDL and other lipoprotein receptors binding. 161-164 (LRKR) contributes to the heparin binding site. Positions 209-289 (AATVGTLASQ…SWFEPLVEDM (81 aa)) are lipid-binding and lipoprotein association. 228-235 (HQKLRGRV) contacts heparin. Residues 265 to 316 (SQMRLQAEAFQARLKSWFEPLVEDMQRQWAGLVEKVQLAMATSSTSAPSENH) form a homooligomerization region. Positions 277 to 289 (RLKSWFEPLVEDM) are specificity for association with VLDL.

Belongs to the apolipoprotein A1/A4/E family. In terms of assembly, homotetramer. May interact with ABCA1; functionally associated with ABCA1 in the biogenesis of HDLs. May interact with APP/A4 amyloid-beta peptide; the interaction is extremely stable in vitro but its physiological significance is unclear. May interact with MAPT. May interact with MAP2. In the cerebrospinal fluid, interacts with secreted SORL1. Interacts with PMEL; this allows the loading of PMEL luminal fragment on ILVs to induce fibril nucleation. Post-translationally, APOE exists as multiple glycosylated and sialylated glycoforms within cells and in plasma. The extent of glycosylation and sialylation are tissue and context specific. Glycated in plasma VLDL. In terms of processing, phosphorylated by FAM20C in the extracellular medium.

The protein resides in the secreted. The protein localises to the extracellular space. Its subcellular location is the extracellular matrix. It localises to the extracellular vesicle. It is found in the endosome. The protein resides in the multivesicular body. Its function is as follows. APOE is an apolipoprotein, a protein associating with lipid particles, that mainly functions in lipoprotein-mediated lipid transport between organs via the plasma and interstitial fluids. APOE is a core component of plasma lipoproteins and is involved in their production, conversion and clearance. Apolipoproteins are amphipathic molecules that interact both with lipids of the lipoprotein particle core and the aqueous environment of the plasma. As such, APOE associates with chylomicrons, chylomicron remnants, very low density lipoproteins (VLDL) and intermediate density lipoproteins (IDL) but shows a preferential binding to high-density lipoproteins (HDL). It also binds a wide range of cellular receptors including the LDL receptor/LDLR and the very low-density lipoprotein receptor/VLDLR that mediate the cellular uptake of the APOE-containing lipoprotein particles. Finally, APOE also has a heparin-binding activity and binds heparan-sulfate proteoglycans on the surface of cells, a property that supports the capture and the receptor-mediated uptake of APOE-containing lipoproteins by cells. The chain is Apolipoprotein E (APOE) from Lipotes vexillifer (Yangtze river dolphin).